The sequence spans 558 residues: Potassium-transporting ATPase potassium-binding subunit 1 (558 aa).

12 consecutive transmembrane segments (helical) span residues 1-21 (MEII…SGYL), 66-86 (FNGF…WLFL), 127-147 (MIVM…VCIA), 166-186 (IVRF…ILLM), 245-265 (IWSN…MLFL), 281-301 (ALIL…LTMW), 327-347 (FGAG…TGSV), 354-374 (LTPI…VFGG), 377-397 (VGLM…SLMV), 416-436 (IVLV…LAFM), 482-502 (ISTG…QLMI), and 531-551 (IVFI…LGPI).

The protein belongs to the KdpA family. In terms of assembly, the system is composed of three essential subunits: KdpA, KdpB and KdpC.

It localises to the cell membrane. In terms of biological role, part of the high-affinity ATP-driven potassium transport (or Kdp) system, which catalyzes the hydrolysis of ATP coupled with the electrogenic transport of potassium into the cytoplasm. This subunit binds the extracellular potassium ions and delivers the ions to the membrane domain of KdpB through an intramembrane tunnel. This chain is Potassium-transporting ATPase potassium-binding subunit 1, found in Staphylococcus aureus (strain Mu50 / ATCC 700699).